Consider the following 717-residue polypeptide: F-box only protein 42 (717 aa).

Residues 1–30 are compositionally biased toward acidic residues; sequence MASSSDSEDDSVMAVDQEETALEGTMEQDE. A disordered region spans residues 1–34; the sequence is MASSSDSEDDSVMAVDQEETALEGTMEQDEDPHP. One can recognise an F-box domain in the interval 44-93; the sequence is NRSMSELPEEVLEYILSFLSPYQEHKTAALVCKQWYRLIKGVAHQCYHGF. 4 Kelch repeats span residues 132–184, 186–242, 244–293, and 295–342; these read SMYV…VYKD, LVLF…VIGD, MIVF…VIDD, and TLLI…LWCH. Residues 361 to 452 are disordered; that stretch reads RAPLSPSLNS…NLSPGTVAVG (92 aa). The segment covering 363–376 has biased composition (low complexity); sequence PLSPSLNSRPSPIS. 2 positions are modified to phosphoserine: Ser365 and Ser373. A Phosphothreonine modification is found at Thr378. Polar residues predominate over residues 416–426; it reads QRQTPSGSREG. Phosphoserine is present on Ser552. Low complexity predominate over residues 570 to 595; it reads GPSASAALSPPLGSSPSSPGSQSLSS. The disordered stretch occupies residues 570–632; sequence GPSASAALSP…HHPPQSLNVG (63 aa).

Component of some SCF complex, composed of CUL1, SKP1, RBX1 and FBXO42. Interacts (via the kelch domain) with p53/TP53; interaction is direct.

Functionally, substrate-recognition component of some SCF (SKP1-CUL1-F-box protein)-type E3 ubiquitin ligase complex. Specifically recognizes p53/TP53, promoting its ubiquitination and degradation. The polypeptide is F-box only protein 42 (Fbxo42) (Mus musculus (Mouse)).